We begin with the raw amino-acid sequence, 802 residues long: Protein enabled homolog (802 aa).

The WH1 domain occupies 1 to 111 (MSEQSICQAR…SAMMHALEVL (111 aa)). Polar residues predominate over residues 143-155 (NSQLPAQVQNGPS). The tract at residues 143-166 (NSQLPAQVQNGPSQEELEIQRRQL) is disordered. S144 carries the post-translational modification Phosphoserine. Positions 154 to 258 (PSQEELEIQR…ERERRMSNAA (105 aa)) form a coiled coil. A run of 7 repeats spans residues 175–179 (LERER), 180–184 (MERER), 185–189 (LERER), 190–194 (LERER), 195–199 (LERER), 200–204 (LEQEQ), and 205–209 (LERQR). Positions 175–209 (LERERMERERLERERLERERLERERLEQEQLERQR) are 7 X 5 AA tandem repeats of [LM]-E-[QR]-[EQ]-[QR]. Residues 245–254 (QVEWERERRM) show a composition bias toward basic and acidic residues. 2 disordered regions span residues 245-287 (QVEW…PSYA) and 341-622 (ATVP…RPLT). Position 255 is a phosphoserine; by PKA (S255). Positions 255–278 (SNAAPSSDSSLSSAPLPEYSSCQP) are enriched in low complexity. A compositionally biased stretch (polar residues) spans 348-361 (NKNSRPSSPVNTPS). Phosphoserine is present on S383. Over residues 386-410 (IMISSPPGKATGPRPVLPVCVSSPV) the composition is skewed to low complexity. The segment covering 431–464 (VSPPPTSGPAAPPPPPPPPPPPPPPPLPPPPLPP) has biased composition (pro residues). The segment covering 485–505 (STPSSKPSVLPSPSAGAPASA) has biased composition (low complexity). Polar residues predominate over residues 525–535 (AASQPAESPTP). Over residues 542–553 (PPAPPPPPPLPS) the composition is skewed to pro residues. Y557 is modified (phosphotyrosine). Residues 561–605 (LPPPPGPPPPPPLPSTGPPPPPPPPPPLPNQAPPPPPPPPAPPLP) show a composition bias toward pro residues. Residues 623 to 643 (GLAAAIAGAKLRKVSRVEDGS) are EVH2 block A. The segment at 623 to 799 (GLAAAIAGAK…DAIRQELSKS (177 aa)) is EVH2. Positions 632 to 635 (KLRK) match the KLKR motif. Disordered stretches follow at residues 639-675 (VEDG…GGSG) and 691-764 (AEKG…TEGL). The span at 664–675 (RGNGPLPLGGSG) shows a compositional bias: gly residues. An EVH2 block B region spans residues 674–691 (SGLMEEMSALLARRRRIA). The span at 731–760 (RTNTMNGSKSPVISRPKSTPSSQPSANGVQ) shows a compositional bias: polar residues. 2 positions are modified to phosphoserine: S738 and S740. Residues 765-799 (DYDRLKQDILDEMRKELAKLKEELIDAIRQELSKS) form an EVH2 block C region. A coiled-coil region spans residues 767 to 797 (DRLKQDILDEMRKELAKLKEELIDAIRQELS).

It belongs to the Ena/VASP family. As to quaternary structure, homotetramer. Interacts with APBB1IP, APBB1, PFN1 and ROBO4. Isoforms, containing the polyproline-rich regions with PPLP motifs, bind the WW domain of APBB1IP. Isoforms, containing the PPSY motif, bind, in vitro, to the WW2 and WW3 domains of NEDD4 and to the WW1 domain of YAP1. Binds the SH3 domain of BAIAP2-alpha but only after the autoinhibitory region of BAIAP2-alpha has been blocked by interaction with CDC42. Interacts, via the EVH1/WH1 domain, with the Pro-rich domains from VCL, ZYX and Listeria monocytogenes actA and with TES (via LIM domain). The TES LIM domain and the Pro-rich domains from VCL or ZYX compete for the same binding site. Interaction with ZYX is important for targeting ENAH to focal adhesions and enhances production of actin-rich structures at the apical surface of cells. Binds GPHN. Heterotrimer with TES and ACTL7A. Interacts with FAT1 (via EVH1 domains). Interacts, through the Pro-rich region, with the C-terminal SH3 domain of DNMPB. Interacts with PRPF40A. In terms of processing, NTN1-induced PKA phosphorylation on Ser-255 directly parallels the formation of filopodial protrusions. As to expression, expressed in heart and testis, lower levels in lung, skeletal muscle, kidney, pancreas and brain. Isoform 5 is expressed exclusively in the brain. Isoform 2 is expressed predominantly in brain, testis, ovary and fat. In the brain, isoforms 2 and 5 are expressed at highest levels in the hippocampus, cortex and midbrain, and at lowest levels in the striatum and cerebellum. Isoform 6 is expressed in brain and spleen.

It localises to the cytoplasm. The protein resides in the cytoskeleton. It is found in the cell projection. The protein localises to the lamellipodium. Its subcellular location is the filopodium. It localises to the synapse. The protein resides in the cell junction. It is found in the focal adhesion. Its function is as follows. Ena/VASP proteins are actin-associated proteins involved in a range of processes dependent on cytoskeleton remodeling and cell polarity such as axon guidance and lamellipodial and filopodial dynamics in migrating cells. ENAH induces the formation of F-actin rich outgrowths in fibroblasts. Acts synergistically with BAIAP2-alpha and downstream of NTN1 to promote filipodia formation. The sequence is that of Protein enabled homolog (Enah) from Mus musculus (Mouse).